The sequence spans 432 residues: Pachytene checkpoint protein 2 homolog (432 aa).

Gly-179–Thr-186 contacts ATP.

This sequence belongs to the AAA ATPase family. PCH2 subfamily.

Plays a key role in chromosome recombination and chromosome structure development during meiosis. Required at early steps in meiotic recombination that leads to non-crossovers pathways. Also needed for efficient completion of homologous synapsis by influencing crossover distribution along the chromosomes affecting both crossovers and non-crossovers pathways. The chain is Pachytene checkpoint protein 2 homolog (trip13) from Xenopus tropicalis (Western clawed frog).